A 39-amino-acid chain; its full sequence is Glutenin, high molecular weight subunit PC237 (39 aa).

The protein belongs to the gliadin/glutenin family. As to quaternary structure, disulfide-bridge linked aggregates.

In terms of biological role, glutenins are high-molecular weight seed storage proteins of wheat endosperm. Thought to be responsible for the visco-elastic property of wheat dough. The protein is Glutenin, high molecular weight subunit PC237 of Triticum aestivum (Wheat).